The sequence spans 664 residues: Chaperone protein dnaK1 (664 aa).

Thr-198 bears the Phosphothreonine; by autocatalysis mark.

The protein belongs to the heat shock protein 70 family.

Functionally, acts as a chaperone. The chain is Chaperone protein dnaK1 (dnaK1) from Prochlorococcus marinus (strain MIT 9313).